The chain runs to 565 residues: NAD-dependent malic enzyme (565 aa).

Residue Tyr104 is the Proton donor of the active site. Residue Arg157 participates in NAD(+) binding. Lys175 (proton acceptor) is an active-site residue. Residues Glu246, Asp247, and Asp270 each contribute to the a divalent metal cation site. The NAD(+) site is built by Asp270 and Asn418.

This sequence belongs to the malic enzymes family. As to quaternary structure, homotetramer. The cofactor is Mg(2+). Requires Mn(2+) as cofactor.

It carries out the reaction (S)-malate + NAD(+) = pyruvate + CO2 + NADH. It catalyses the reaction oxaloacetate + H(+) = pyruvate + CO2. This chain is NAD-dependent malic enzyme, found in Enterobacter sp. (strain 638).